We begin with the raw amino-acid sequence, 536 residues long: Allene oxide synthase, chloroplastic (536 aa).

Residues 1 to 58 (MASSALNNLVAVNPNTLSPSPKSTPLPNTFSNLRRVSAFRPIKASLFGDSPIKIPGIT) constitute a chloroplast transit peptide. Residues K151, H182, and K186 each contribute to the heme b site. (13S)-hydroperoxy-(9Z,11E)-octadecadienoate-binding residues include S262, N339, and K345. Residue N339 coordinates (13S)-hydroperoxy-(9Z,11E,15Z)-octadecatrienoate. Residues K487 and C489 each contribute to the heme b site.

The protein belongs to the cytochrome P450 family. Requires heme b as cofactor.

It localises to the plastid. The protein resides in the chloroplast. It catalyses the reaction (13S)-hydroperoxy-(9Z,11E,15Z)-octadecatrienoate = (9Z,13S,15Z)-12,13-epoxyoctadeca-9,11,15-trienoate + H2O. The enzyme catalyses (13S)-hydroperoxy-(9Z,11E)-octadecadienoate = (9Z,13S)-12,13-epoxyoctadeca-9,11-dienoate + H2O. It participates in lipid metabolism; oxylipin biosynthesis. Functionally, cytochrome P450 enzyme involved in the biosynthesis of oxylipin jasmonates, important phytohormones acting as growth regulators and signaling molecules for plant defense. Functions as an allene oxide synthase that converts hydroperoxy fatty acids to unstable allene epoxides. Catalyzes the dehydration of 13-HPOTE ((13S)-hydroperoxy-(9Z,11E,15Z)-octadecatrienoate), as well as 13-HPODE ((13S)-hydroperoxy-(9Z,11E)-octadecadienoate). This Linum usitatissimum (Flax) protein is Allene oxide synthase, chloroplastic (CYP74A).